The primary structure comprises 21 residues: Ferredoxin (21 aa).

The 20-residue stretch at 2–21 (KVKVDADACIGCGVCVELCP) folds into the 4Fe-4S ferredoxin-type domain. [4Fe-4S] cluster-binding residues include Cys-10, Cys-13, and Cys-16.

As to quaternary structure, monomer. [4Fe-4S] cluster is required as a cofactor.

Its function is as follows. Ferredoxins are iron-sulfur proteins that transfer electrons in a wide variety of metabolic reactions. This chain is Ferredoxin (fdxA), found in Pyrococcus woesei.